Reading from the N-terminus, the 112-residue chain is Nucleoid-associated protein FTF0810c (112 aa).

Positions 1–27 are disordered; it reads MNFDMSKLMQQAQKMQEQMKKAQQERE. Residues 17-27 show a composition bias toward basic and acidic residues; the sequence is EQMKKAQQERE.

It belongs to the YbaB/EbfC family. As to quaternary structure, homodimer.

It localises to the cytoplasm. It is found in the nucleoid. Binds to DNA and alters its conformation. May be involved in regulation of gene expression, nucleoid organization and DNA protection. In Francisella tularensis subsp. tularensis (strain FSC 198), this protein is Nucleoid-associated protein FTF0810c.